The chain runs to 239 residues: Mediator of RNA polymerase II transcription subunit 7 (239 aa).

Disordered stretches follow at residues 1 to 21 and 43 to 66; these read MSSL…PPPP and LFVN…DMSV. A compositionally biased stretch (basic and acidic residues) spans 46–66; sequence NDEKGKTKGKEKKSDDRDMSV.

This sequence belongs to the Mediator complex subunit 7 family. In terms of assembly, component of the Mediator complex.

The protein resides in the nucleus. In terms of biological role, component of the Mediator complex, a coactivator involved in the regulated transcription of nearly all RNA polymerase II-dependent genes. Mediator functions as a bridge to convey information from gene-specific regulatory proteins to the basal RNA polymerase II transcription machinery. Mediator is recruited to promoters by direct interactions with regulatory proteins and serves as a scaffold for the assembly of a functional preinitiation complex with RNA polymerase II and the general transcription factors. In Cryptococcus neoformans var. neoformans serotype D (strain B-3501A) (Filobasidiella neoformans), this protein is Mediator of RNA polymerase II transcription subunit 7 (MED7).